The primary structure comprises 920 residues: Isoleucine--tRNA ligase (920 aa).

Residues 58-68 (PYANGHLHLGH) carry the 'HIGH' region motif. L-isoleucyl-5'-AMP is bound at residue Glu569. Residues 610-614 (KMSKS) carry the 'KMSKS' region motif. Lys613 serves as a coordination point for ATP. 4 residues coordinate Zn(2+): Cys895, Cys898, Cys910, and Cys913.

Belongs to the class-I aminoacyl-tRNA synthetase family. IleS type 1 subfamily. In terms of assembly, monomer. The cofactor is Zn(2+).

The protein localises to the cytoplasm. The catalysed reaction is tRNA(Ile) + L-isoleucine + ATP = L-isoleucyl-tRNA(Ile) + AMP + diphosphate. In terms of biological role, catalyzes the attachment of isoleucine to tRNA(Ile). As IleRS can inadvertently accommodate and process structurally similar amino acids such as valine, to avoid such errors it has two additional distinct tRNA(Ile)-dependent editing activities. One activity is designated as 'pretransfer' editing and involves the hydrolysis of activated Val-AMP. The other activity is designated 'posttransfer' editing and involves deacylation of mischarged Val-tRNA(Ile). This is Isoleucine--tRNA ligase from Helicobacter pylori (strain P12).